Consider the following 188-residue polypeptide: Protein-arginine kinase activator protein (188 aa).

4 short sequence motifs (CXXC metal binding motif) span residues 3–6, 29–32, 87–90, and 105–108; these read CENC, CQTC, CPSC, and CANC. Positions 145–180 constitute a UVR domain; it reads KRKIEEKNEYLKKLIEIQDFEEAAIVRDEIKALKAE.

Interacts with McsB and CtsR; the CXXC motifs are needed for the binding.

Its function is as follows. Activates the phosphorylation activity of the protein-arginine kinase McsB. May function as an important molecule for oxidative tolerance in various types of stress including that of heavy metals. Binds to Cu(2+), Zn(2+), Co(2+) and Cd(2+) via its CXXC metal binding motifs. The chain is Protein-arginine kinase activator protein from Staphylococcus aureus (strain NCTC 8325 / PS 47).